Here is a 392-residue protein sequence, read N- to C-terminus: 23S rRNA (uracil(747)-C(5))-methyltransferase RlmC (392 aa).

Positions 4, 12, 15, and 93 each coordinate [4Fe-4S] cluster. Residues Q218, F247, E275, and N321 each contribute to the S-adenosyl-L-methionine site. C348 functions as the Nucleophile in the catalytic mechanism.

This sequence belongs to the class I-like SAM-binding methyltransferase superfamily. RNA M5U methyltransferase family. RlmC subfamily.

The catalysed reaction is uridine(747) in 23S rRNA + S-adenosyl-L-methionine = 5-methyluridine(747) in 23S rRNA + S-adenosyl-L-homocysteine + H(+). Functionally, catalyzes the formation of 5-methyl-uridine at position 747 (m5U747) in 23S rRNA. The chain is 23S rRNA (uracil(747)-C(5))-methyltransferase RlmC from Haemophilus influenzae (strain ATCC 51907 / DSM 11121 / KW20 / Rd).